The sequence spans 298 residues: uncharacterized protein (298 aa).

Asp119 is an active-site residue.

This sequence belongs to the pseudouridine synthase RluA family.

The catalysed reaction is a uridine in RNA = a pseudouridine in RNA. This is an uncharacterized protein from Helicobacter pylori (strain ATCC 700392 / 26695) (Campylobacter pylori).